A 235-amino-acid polypeptide reads, in one-letter code: Large ribosomal subunit protein uL1 (235 aa).

It belongs to the universal ribosomal protein uL1 family. As to quaternary structure, part of the 50S ribosomal subunit.

Binds directly to 23S rRNA. The L1 stalk is quite mobile in the ribosome, and is involved in E site tRNA release. In terms of biological role, protein L1 is also a translational repressor protein, it controls the translation of the L11 operon by binding to its mRNA. The chain is Large ribosomal subunit protein uL1 from Methylibium petroleiphilum (strain ATCC BAA-1232 / LMG 22953 / PM1).